A 206-amino-acid polypeptide reads, in one-letter code: LexA repressor (206 aa).

The segment at residues 28 to 48 (RAEIARELGFRSANAAEEHLK) is a DNA-binding region (H-T-H motif). Active-site for autocatalytic cleavage activity residues include serine 123 and lysine 160.

It belongs to the peptidase S24 family. Homodimer.

The catalysed reaction is Hydrolysis of Ala-|-Gly bond in repressor LexA.. In terms of biological role, represses a number of genes involved in the response to DNA damage (SOS response), including recA and lexA. In the presence of single-stranded DNA, RecA interacts with LexA causing an autocatalytic cleavage which disrupts the DNA-binding part of LexA, leading to derepression of the SOS regulon and eventually DNA repair. The protein is LexA repressor of Vibrio parahaemolyticus serotype O3:K6 (strain RIMD 2210633).